The primary structure comprises 183 residues: Ribosome rescue factor SmrB (183 aa).

Residues 98–173 (LDLHGLTQLQ…GDAALLVLIE (76 aa)) form the Smr domain.

The protein belongs to the SmrB family. Associates with collided ribosomes, but not with correctly translating polysomes.

Functionally, acts as a ribosome collision sensor. Detects stalled/collided disomes (pairs of ribosomes where the leading ribosome is stalled and a second ribosome has collided with it) and endonucleolytically cleaves mRNA at the 5' boundary of the stalled ribosome. Stalled/collided disomes form a new interface (primarily via the 30S subunits) that binds SmrB. Cleaved mRNA becomes available for tmRNA ligation, leading to ribosomal subunit dissociation and rescue of stalled ribosomes. This is Ribosome rescue factor SmrB from Escherichia coli (strain 55989 / EAEC).